The sequence spans 101 residues: Small ribosomal subunit protein uS14 (101 aa).

The protein belongs to the universal ribosomal protein uS14 family. As to quaternary structure, part of the 30S ribosomal subunit. Contacts proteins S3 and S10.

In terms of biological role, binds 16S rRNA, required for the assembly of 30S particles and may also be responsible for determining the conformation of the 16S rRNA at the A site. This Ectopseudomonas mendocina (strain ymp) (Pseudomonas mendocina) protein is Small ribosomal subunit protein uS14.